A 338-amino-acid chain; its full sequence is Aspartate carbamoyltransferase catalytic subunit (338 aa).

R72 and T73 together coordinate carbamoyl phosphate. Residue K100 coordinates L-aspartate. Residues R122, H152, and Q155 each coordinate carbamoyl phosphate. R186 and R243 together coordinate L-aspartate. Residues G284 and P285 each coordinate carbamoyl phosphate.

Belongs to the aspartate/ornithine carbamoyltransferase superfamily. ATCase family. Heterododecamer (2C3:3R2) of six catalytic PyrB chains organized as two trimers (C3), and six regulatory PyrI chains organized as three dimers (R2).

The catalysed reaction is carbamoyl phosphate + L-aspartate = N-carbamoyl-L-aspartate + phosphate + H(+). The protein operates within pyrimidine metabolism; UMP biosynthesis via de novo pathway; (S)-dihydroorotate from bicarbonate: step 2/3. Functionally, catalyzes the condensation of carbamoyl phosphate and aspartate to form carbamoyl aspartate and inorganic phosphate, the committed step in the de novo pyrimidine nucleotide biosynthesis pathway. The protein is Aspartate carbamoyltransferase catalytic subunit of Acinetobacter baumannii (strain ACICU).